A 414-amino-acid chain; its full sequence is Esterase FrsA (414 aa).

This sequence belongs to the FrsA family.

The enzyme catalyses a carboxylic ester + H2O = an alcohol + a carboxylate + H(+). Catalyzes the hydrolysis of esters. This is Esterase FrsA from Escherichia coli O6:K15:H31 (strain 536 / UPEC).